The sequence spans 138 residues: Phosphoribosyl-AMP cyclohydrolase (138 aa).

D85 provides a ligand contact to Mg(2+). C86 contacts Zn(2+). Positions 87 and 89 each coordinate Mg(2+). Zn(2+) contacts are provided by C102 and C109.

This sequence belongs to the PRA-CH family. In terms of assembly, homodimer. Requires Mg(2+) as cofactor. It depends on Zn(2+) as a cofactor.

It localises to the cytoplasm. It catalyses the reaction 1-(5-phospho-beta-D-ribosyl)-5'-AMP + H2O = 1-(5-phospho-beta-D-ribosyl)-5-[(5-phospho-beta-D-ribosylamino)methylideneamino]imidazole-4-carboxamide. It functions in the pathway amino-acid biosynthesis; L-histidine biosynthesis; L-histidine from 5-phospho-alpha-D-ribose 1-diphosphate: step 3/9. Functionally, catalyzes the hydrolysis of the adenine ring of phosphoribosyl-AMP. In Methanothermobacter thermautotrophicus (strain ATCC 29096 / DSM 1053 / JCM 10044 / NBRC 100330 / Delta H) (Methanobacterium thermoautotrophicum), this protein is Phosphoribosyl-AMP cyclohydrolase.